A 215-amino-acid chain; its full sequence is Protein GET1 (215 aa).

Residues 1-4 are Lumenal-facing; the sequence is MINL. Residues 5–24 traverse the membrane as a helical segment; sequence ALVIFLCTLLNQIVSWVGKS. The Cytoplasmic portion of the chain corresponds to 25-108; the sequence is VLQEIAFTAY…SFSKKFSTLL (84 aa). Residues 73-94 adopt a coiled-coil conformation; it reads AKLRRKLDKGLADLEKTNNTLS. Residues 109–129 form a helical membrane-spanning segment; the sequence is WLMTTGAQFLLSWWFRKQPIF. Residues 130-153 are Lumenal-facing; it reads WLPEGWVPYPVAWLLSFPSAPIGS. A helical membrane pass occupies residues 154-170; the sequence is VSSGAWGAICRRVLSTL. Over 171 to 215 the chain is Cytoplasmic; that stretch reads QEIIQSLLAPSPAATGPVPTGPSSAKNDQPEAKIEALALEHEKLD. Residues 182-202 are disordered; that stretch reads PAATGPVPTGPSSAKNDQPEA.

This sequence belongs to the WRB/GET1 family. As to quaternary structure, interacts with GET3.

It is found in the endoplasmic reticulum membrane. Functionally, required for the post-translational delivery of tail-anchored (TA) proteins to the endoplasmic reticulum. Acts as a membrane receptor for soluble GET3, which recognizes and selectively binds the transmembrane domain of TA proteins in the cytosol. The sequence is that of Protein GET1 from Cryptococcus neoformans var. neoformans serotype D (strain JEC21 / ATCC MYA-565) (Filobasidiella neoformans).